The primary structure comprises 253 residues: Chitooligosaccharide deacetylase (253 aa).

The Mg(2+) site is built by H61 and H126.

The protein belongs to the YdjC deacetylase family. ChbG subfamily. In terms of assembly, homodimer. Mg(2+) serves as cofactor.

The protein resides in the cytoplasm. It catalyses the reaction N,N'-diacetylchitobiose + H2O = N-acetyl-beta-D-glucosaminyl-(1-&gt;4)-D-glucosamine + acetate. It carries out the reaction diacetylchitobiose-6'-phosphate + H2O = N'-monoacetylchitobiose-6'-phosphate + acetate. Its pathway is glycan degradation; chitin degradation. Involved in the degradation of chitin. ChbG is essential for growth on the acetylated chitooligosaccharides chitobiose and chitotriose but is dispensable for growth on cellobiose and chitosan dimer, the deacetylated form of chitobiose. Deacetylation of chitobiose-6-P and chitotriose-6-P is necessary for both the activation of the chb promoter by the regulatory protein ChbR and the hydrolysis of phosphorylated beta-glucosides by the phospho-beta-glucosidase ChbF. Catalyzes the removal of only one acetyl group from chitobiose-6-P to yield monoacetylchitobiose-6-P, the inducer of ChbR and the substrate of ChbF. This chain is Chitooligosaccharide deacetylase, found in Serratia marcescens.